A 290-amino-acid polypeptide reads, in one-letter code: Barley B recombinant-like protein C (290 aa).

2 disordered regions span residues 60–90 and 102–183; these read PHHH…YGMM and QPEP…RKNI. Positions 104-116 are enriched in pro residues; the sequence is EPQPQLQHPPSPP. Residues 138–158 are compositionally biased toward basic residues; the sequence is PPKKRQQGRQPKVLRPKKPKK.

This sequence belongs to the BBR/BPC family.

Its subcellular location is the nucleus. Functionally, transcriptional regulator that specifically binds to GA-rich elements (GAGA-repeats) present in regulatory sequences of genes involved in developmental processes. This chain is Barley B recombinant-like protein C, found in Oryza sativa subsp. japonica (Rice).